Consider the following 104-residue polypeptide: MLFDSSFRERRTFYNAAGSVSVPFYKQIAEQTHDIFKRCNVREHILRPCPVDISHFSRDLNGAPLSYTENIKFTAKFWANAWIDYESVMKTLLVKLYISFFFMC.

This is an uncharacterized protein from Saccharomyces cerevisiae (strain ATCC 204508 / S288c) (Baker's yeast).